The sequence spans 80 residues: Defensin-like protein 50 (80 aa).

A signal peptide spans Met1–Ala27. 4 disulfides stabilise this stretch: Cys39/Cys79, Cys43/Cys66, Cys52/Cys77, and Cys56/Cys78.

Belongs to the DEFL family.

Its subcellular location is the secreted. This is Defensin-like protein 50 (LCR49) from Arabidopsis thaliana (Mouse-ear cress).